Reading from the N-terminus, the 596-residue chain is Neuroepithelial cell-transforming gene 1 protein (596 aa).

Met1 carries the N-acetylmethionine modification. The interval 1–44 (MEPELAAQKQPRPRRRSRRASGLSTEGATGPSADTSGSELDGRC) is disordered. The tract at residues 1 to 74 (MEPELAAQKQ…LKRKRREKDD (74 aa)) is necessary for nuclear localization. Positions 12–19 (RPRRRSRR) match the Nuclear localization signal motif. Residues Ser21 and Ser32 each carry the phosphoserine modification. Residues 22–38 (GLSTEGATGPSADTSGS) show a composition bias toward polar residues. Residues 66–72 (KRKRREK) carry the Nuclear localization signal motif. Residues Ser100, Ser106, and Ser122 each carry the phosphoserine modification. The tract at residues 127-146 (GDHRSPASAQKFSSRSTVPT) is disordered. The segment covering 133-145 (ASAQKFSSRSTVP) has biased composition (polar residues). Residues 174–356 (RRQEAIYEMS…QGVLSDINLK (183 aa)) form the DH domain. The region spanning 386 to 501 (VLLCHGELRS…WFNCIRAAIA (116 aa)) is the PH domain. Ser508 carries the phosphoserine modification. Positions 562-596 (MAEDSKSLKTHQTQPGIRRARDKALSGGKRKETLV) are disordered.

As to quaternary structure, interacts with RHOA in its GTP- and GDP-bound states, and with CDC42 in its GTP-bound state. Interacts with the PDZ 1 domain of BAIAP1. Widely expressed.

The protein localises to the cytoplasm. It localises to the nucleus. Its function is as follows. Acts as a guanine nucleotide exchange factor (GEF) for RhoA GTPase. May be involved in activation of the SAPK/JNK pathway Stimulates genotoxic stress-induced RHOB activity in breast cancer cells leading to their cell death. The sequence is that of Neuroepithelial cell-transforming gene 1 protein (NET1) from Homo sapiens (Human).